A 66-amino-acid chain; its full sequence is Spore coat protein C (66 aa).

The protein to B.subtilis protein YnzH.

The protein is Spore coat protein C (cotC) of Bacillus subtilis (strain 168).